Consider the following 254-residue polypeptide: Phosphoribosylaminoimidazole-succinocarboxamide synthase (254 aa).

Belongs to the SAICAR synthetase family.

It carries out the reaction 5-amino-1-(5-phospho-D-ribosyl)imidazole-4-carboxylate + L-aspartate + ATP = (2S)-2-[5-amino-1-(5-phospho-beta-D-ribosyl)imidazole-4-carboxamido]succinate + ADP + phosphate + 2 H(+). It participates in purine metabolism; IMP biosynthesis via de novo pathway; 5-amino-1-(5-phospho-D-ribosyl)imidazole-4-carboxamide from 5-amino-1-(5-phospho-D-ribosyl)imidazole-4-carboxylate: step 1/2. This is Phosphoribosylaminoimidazole-succinocarboxamide synthase from Brucella canis (strain ATCC 23365 / NCTC 10854 / RM-666).